Here is a 365-residue protein sequence, read N- to C-terminus: Mitogen-activated protein kinase p38b (365 aa).

Residues 24–311 form the Protein kinase domain; sequence YQNLQPVGQG…AEQALAHPYM (288 aa). ATP contacts are provided by residues 30 to 38 and Lys-53; that span reads VGQGAYGQV. Catalysis depends on Asp-153, which acts as the Proton acceptor. Residue Thr-183 is modified to Phosphothreonine. The TXY motif lies at 183 to 185; sequence TGY. Tyr-185 carries the phosphotyrosine modification.

This sequence belongs to the protein kinase superfamily. CMGC Ser/Thr protein kinase family. MAP kinase subfamily. The cofactor is Mg(2+). Post-translationally, dually phosphorylated on Thr-183 and Tyr-185, which activates the enzyme. As to expression, at mid-embryogenesis, highest expression is seen in developing anterior and posterior midguts. Almost ubiquitous expression throughout all development.

Its subcellular location is the nucleus. The catalysed reaction is L-seryl-[protein] + ATP = O-phospho-L-seryl-[protein] + ADP + H(+). It catalyses the reaction L-threonyl-[protein] + ATP = O-phospho-L-threonyl-[protein] + ADP + H(+). Its activity is regulated as follows. Activated by threonine and tyrosine phosphorylation by Mkk3. Functionally, kinase involved in dpp signal transduction pathway in the process of wing morphogenesis when the levels of dpp are enhanced or inhibited. May down-regulate insect immunity gene expression after prolonged infection. The sequence is that of Mitogen-activated protein kinase p38b from Drosophila melanogaster (Fruit fly).